The sequence spans 60 residues: Large ribosomal subunit protein uL30 (60 aa).

It belongs to the universal ribosomal protein uL30 family. As to quaternary structure, part of the 50S ribosomal subunit.

The polypeptide is Large ribosomal subunit protein uL30 (Acidovorax ebreus (strain TPSY) (Diaphorobacter sp. (strain TPSY))).